The chain runs to 249 residues: Probable GDP-mannose transporter 2 (249 aa).

The Lumenal segment spans residues 1–15; the sequence is MIYTSSKSLQYLAVP. The helical transmembrane segment at 16–36 threads the bilayer; that stretch reads IYTIFKNLTIILIAYGEVLFF. Residues 37-47 are Cytoplasmic-facing; sequence GGKVTSMELTS. A helical transmembrane segment spans residues 48 to 68; sequence FIMMVLSSVVATWGDQQAIAI. The Lumenal segment spans residues 69-84; sequence KASSLEDLDQELVEST. A helical transmembrane segment spans residues 85 to 105; that stretch reads IFVLNPGYLWMFTNCISSALF. The Cytoplasmic segment spans residues 106–122; it reads VLIMRKRIRLTNFKDYD. A helical membrane pass occupies residues 123 to 143; that stretch reads TMFYNNVLALPLLLVFSFIME. The Lumenal segment spans residues 144 to 159; sequence DWSTKNLSVNLSADSL. 2 N-linked (GlcNAc...) asparagine glycosylation sites follow: asparagine 149 and asparagine 153. A helical membrane pass occupies residues 160–180; it reads AAMVISGLMSVGISYCSGWCV. Residues 181-186 lie on the Cytoplasmic side of the membrane; it reads RVTSST. The chain crosses the membrane as a helical span at residues 187–207; it reads TYSMVGALNKLPIALAGLVFF. Residues 208–211 are Lumenal-facing; the sequence is DAPK. Residues 212–232 traverse the membrane as a helical segment; it reads NFLSFFSIFLGFLSGLLYAVA. The Cytoplasmic portion of the chain corresponds to 233 to 249; it reads KQKKIQQQKVLAATLEK.

It belongs to the TPT transporter family. SLC35D subfamily.

It is found in the golgi apparatus membrane. The protein localises to the cytoplasmic vesicle membrane. Its subcellular location is the endoplasmic reticulum membrane. Its function is as follows. Involved in the import of GDP-mannose from the cytoplasm into the Golgi lumen. The chain is Probable GDP-mannose transporter 2 (HVG1) from Saccharomyces cerevisiae (strain RM11-1a) (Baker's yeast).